The following is a 360-amino-acid chain: Phenylalanine--tRNA ligase alpha subunit (360 aa).

E260 lines the Mg(2+) pocket.

It belongs to the class-II aminoacyl-tRNA synthetase family. Phe-tRNA synthetase alpha subunit type 1 subfamily. In terms of assembly, tetramer of two alpha and two beta subunits. Mg(2+) serves as cofactor.

It localises to the cytoplasm. The enzyme catalyses tRNA(Phe) + L-phenylalanine + ATP = L-phenylalanyl-tRNA(Phe) + AMP + diphosphate + H(+). The chain is Phenylalanine--tRNA ligase alpha subunit from Afipia carboxidovorans (strain ATCC 49405 / DSM 1227 / KCTC 32145 / OM5) (Oligotropha carboxidovorans).